The sequence spans 221 residues: Probable septum site-determining protein MinC (221 aa).

The protein belongs to the MinC family. In terms of assembly, interacts with MinD and FtsZ.

Its function is as follows. Cell division inhibitor that blocks the formation of polar Z ring septums. Rapidly oscillates between the poles of the cell to destabilize FtsZ filaments that have formed before they mature into polar Z rings. Prevents FtsZ polymerization. The protein is Probable septum site-determining protein MinC of Shewanella sp. (strain ANA-3).